Reading from the N-terminus, the 272-residue chain is Formamidopyrimidine-DNA glycosylase (272 aa).

The Schiff-base intermediate with DNA role is filled by Pro-2. The Proton donor role is filled by Glu-3. Lys-57 serves as the catalytic Proton donor; for beta-elimination activity. DNA-binding residues include His-90, Arg-109, and Lys-150. An FPG-type zinc finger spans residues 235–269 (HVYGRAKKKCLLCSSIIQEEKIGQRNTFWCGHCQP). Arg-259 (proton donor; for delta-elimination activity) is an active-site residue.

Belongs to the FPG family. In terms of assembly, monomer. Zn(2+) is required as a cofactor.

The catalysed reaction is Hydrolysis of DNA containing ring-opened 7-methylguanine residues, releasing 2,6-diamino-4-hydroxy-5-(N-methyl)formamidopyrimidine.. The enzyme catalyses 2'-deoxyribonucleotide-(2'-deoxyribose 5'-phosphate)-2'-deoxyribonucleotide-DNA = a 3'-end 2'-deoxyribonucleotide-(2,3-dehydro-2,3-deoxyribose 5'-phosphate)-DNA + a 5'-end 5'-phospho-2'-deoxyribonucleoside-DNA + H(+). Its function is as follows. Involved in base excision repair of DNA damaged by oxidation or by mutagenic agents. Acts as a DNA glycosylase that recognizes and removes damaged bases. Has a preference for oxidized purines, such as 7,8-dihydro-8-oxoguanine (8-oxoG). Has AP (apurinic/apyrimidinic) lyase activity and introduces nicks in the DNA strand. Cleaves the DNA backbone by beta-delta elimination to generate a single-strand break at the site of the removed base with both 3'- and 5'-phosphates. This is Formamidopyrimidine-DNA glycosylase from Aliivibrio fischeri (strain ATCC 700601 / ES114) (Vibrio fischeri).